A 50-amino-acid chain; its full sequence is Thrombin-like enzyme BpirSP27 (50 aa).

Residues 1–50 (VVGGDECNINEHRSLVAIFNSTGFFCSGILLNQEWVLTASHCDSTNFQMK) enclose the Peptidase S1 domain. Asn-20 carries an N-linked (GlcNAc...) asparagine glycan. Cys-26 and Cys-42 form a disulfide bridge. His-41 serves as the catalytic Charge relay system.

Belongs to the peptidase S1 family. Snake venom subfamily. In terms of assembly, monomer. In terms of processing, N-glycosylated. As to expression, expressed by the venom gland.

It is found in the secreted. Its activity is regulated as follows. Inhibited by serine protease inhibitors PMSF, benzamidine, leupeptin and aprotinin, as well as by copper (Cu2+) and manganese (Mn2+) ions. Not inhibited by metalloprotease inhibitors EDTA, EGTA and 1,10-phenanthroline, as well as by barium (Ba2+) and calcium ion (Ca2+). Its function is as follows. Snake venom serine protease that interferes with the hemostatic system of the prey. It preferentially degrades the Bbeta chain (FGB) of fibrinogen, with minor effects on the Aalpha chain (FGA). It presents a lower ability to degrade fibrin clots than BpirSP41. It hydrolyzes chromogenic substrates S-2238 (used for testing thrombin activity), S-2222 (factor Xa), S-2266 (glandular kallikrein and factor XIa), S-2302 (plasma kallikrein, factor XIa and XIIa), and S-2251 (plasmin). It shows a decrease in the clotting time of human plasma in the presence of increasing doses of the enzyme. Its minimum coagulant dose (MCD) is 3.5 ug. It also promotes platelet aggregation in a concentration-dependent manner in the presence or absence of calcium. It also shows 20% inhibition of the hemolytic activity promoted by the complement pathways and possess only a minor role in the induction of edema and pain in rat. This Bothrops pirajai (Piraja's lancehead) protein is Thrombin-like enzyme BpirSP27.